The chain runs to 444 residues: Phosphoglucosamine mutase (444 aa).

Serine 102 acts as the Phosphoserine intermediate in catalysis. Residues serine 102, aspartate 241, aspartate 243, and aspartate 245 each contribute to the Mg(2+) site. Position 102 is a phosphoserine (serine 102).

It belongs to the phosphohexose mutase family. The cofactor is Mg(2+). Activated by phosphorylation.

It catalyses the reaction alpha-D-glucosamine 1-phosphate = D-glucosamine 6-phosphate. Functionally, catalyzes the conversion of glucosamine-6-phosphate to glucosamine-1-phosphate. The polypeptide is Phosphoglucosamine mutase (Histophilus somni (strain 129Pt) (Haemophilus somnus)).